Here is a 294-residue protein sequence, read N- to C-terminus: tRNA-cytidine(32) 2-sulfurtransferase (294 aa).

Residues 70–75 carry the PP-loop motif motif; sequence SGGKDS. Positions 145, 148, and 236 each coordinate [4Fe-4S] cluster.

Belongs to the TtcA family. As to quaternary structure, homodimer. Mg(2+) is required as a cofactor. Requires [4Fe-4S] cluster as cofactor.

The protein localises to the cytoplasm. The catalysed reaction is cytidine(32) in tRNA + S-sulfanyl-L-cysteinyl-[cysteine desulfurase] + AH2 + ATP = 2-thiocytidine(32) in tRNA + L-cysteinyl-[cysteine desulfurase] + A + AMP + diphosphate + H(+). It functions in the pathway tRNA modification. Catalyzes the ATP-dependent 2-thiolation of cytidine in position 32 of tRNA, to form 2-thiocytidine (s(2)C32). The sulfur atoms are provided by the cysteine/cysteine desulfurase (IscS) system. The chain is tRNA-cytidine(32) 2-sulfurtransferase from Rhizobium meliloti (strain 1021) (Ensifer meliloti).